The following is an 86-amino-acid chain: uncharacterized protein (86 aa).

It to M.jannaschii MJ0526.1.

This is an uncharacterized protein from Methanothermobacter thermautotrophicus (strain ATCC 29096 / DSM 1053 / JCM 10044 / NBRC 100330 / Delta H) (Methanobacterium thermoautotrophicum).